The chain runs to 292 residues: Homoserine kinase (292 aa).

81 to 91 (RPRSGLGSSGA) serves as a coordination point for ATP.

It belongs to the GHMP kinase family. Homoserine kinase subfamily.

The protein resides in the cytoplasm. It catalyses the reaction L-homoserine + ATP = O-phospho-L-homoserine + ADP + H(+). It functions in the pathway amino-acid biosynthesis; L-threonine biosynthesis; L-threonine from L-aspartate: step 4/5. Functionally, catalyzes the ATP-dependent phosphorylation of L-homoserine to L-homoserine phosphate. This is Homoserine kinase from Thermococcus kodakarensis (strain ATCC BAA-918 / JCM 12380 / KOD1) (Pyrococcus kodakaraensis (strain KOD1)).